Consider the following 346-residue polypeptide: dTDP-glucose 4,6-dehydratase (346 aa).

Residues 17 to 18, 38 to 41, 64 to 65, 86 to 90, and threonine 105 contribute to the NAD(+) site; these read FI, DKLT, DI, and LAAES. Serine 90 is a substrate binding site. Residue threonine 139 participates in substrate binding. Aspartate 140 (proton donor) is an active-site residue. Active-site proton acceptor residues include glutamate 141 and tyrosine 165. NAD(+) is bound at residue 165–169; sequence YSASK. Asparagine 194 lines the substrate pocket. Position 195 (asparagine 195) interacts with NAD(+). Substrate is bound by residues 204–205, 220–222, arginine 229, asparagine 264, and 298–302; these read KL, PVY, and DRPGH.

It belongs to the NAD(P)-dependent epimerase/dehydratase family. dTDP-glucose dehydratase subfamily. Homodimer. Requires NAD(+) as cofactor.

It carries out the reaction dTDP-alpha-D-glucose = dTDP-4-dehydro-6-deoxy-alpha-D-glucose + H2O. It participates in carbohydrate biosynthesis; dTDP-L-rhamnose biosynthesis. The protein operates within bacterial outer membrane biogenesis; LPS O-antigen biosynthesis. Functionally, catalyzes the dehydration of dTDP-D-glucose to form dTDP-6-deoxy-D-xylo-4-hexulose via a three-step process involving oxidation, dehydration and reduction. The protein is dTDP-glucose 4,6-dehydratase of Neisseria gonorrhoeae.